The chain runs to 500 residues: NAD(P)H-quinone oxidoreductase chain 4, chloroplastic (500 aa).

The next 15 membrane-spanning stretches (helical) occupy residues 4–24, 35–55, 80–100, 113–130, 134–154, 167–187, 208–228, 242–262, 274–294, 305–325, 330–350, 364–384, 386–406, 416–436, and 462–482; these read FYWLTIIVVLPISAGSLIALL, YTICICLFELLLTTYVFCYHF, LGIDGLSIGPILLTGFITTLA, LFHFLMLAMYSGQIGSFS, LLLFFIMWELELIPVYLLLSM, FILYTAGGSIFLLMGVLGMGL, ALEIIFYFGFLIAYAVKSPII, HYSTCMLLAGILLKMGAYGLV, SIFSPWLMIVGTIQIIYAALT, IAYSSVSHMGFIIIGISSITD, GAILQIISHGFIGAALFFLAG, MGGIAILMPRIFTMFSSFSMA, LALPGMSGFVAEFVIFLGIIT, ILITFVMAIGMILTPIYSLSM, and IFIFMCILLPIIGIGIYPDFV.

The protein belongs to the complex I subunit 4 family.

It localises to the plastid. The protein resides in the chloroplast thylakoid membrane. It carries out the reaction a plastoquinone + NADH + (n+1) H(+)(in) = a plastoquinol + NAD(+) + n H(+)(out). The catalysed reaction is a plastoquinone + NADPH + (n+1) H(+)(in) = a plastoquinol + NADP(+) + n H(+)(out). This chain is NAD(P)H-quinone oxidoreductase chain 4, chloroplastic, found in Nymphaea alba (White water-lily).